The sequence spans 301 residues: Cytosolic sulfotransferase 2 (301 aa).

K53–W58 is a 3'-phosphoadenylyl sulfate binding site. The active-site Proton acceptor is the H115. 3'-phosphoadenylyl sulfate contacts are provided by residues R137, S145, Y201, V235 to M240, and R263 to G265.

It belongs to the sulfotransferase 1 family. As to expression, expressed in liver.

The protein resides in the cytoplasm. Its activity is regulated as follows. Inhibited by Co(2+), Zn(2+), Cd(2+) and Pb(2+) ions. Inactivated by Hg(2+) and Cu(2+) ions. Sulfotransferase that utilizes 3'-phospho-5'-adenylyl sulfate (PAPS) as sulfonate donor to catalyze the sulfate conjugation of a variety of xenobiotic and endogenous compounds, including 2-naphthol, hydroxychlorobiphenyls, T3 (triiodo-L-thyronine), T4 (thyroxine), estrone and DOPA. This chain is Cytosolic sulfotransferase 2, found in Danio rerio (Zebrafish).